The primary structure comprises 545 residues: Chaperonin GroEL 2 (545 aa).

ATP contacts are provided by residues 30–33 (TLGP), lysine 51, 87–91 (DGTTT), glycine 415, and aspartate 494. The segment at 526–545 (EKGAGMPGMPPGGGYPGMGM) is disordered. The segment covering 536-545 (PGGGYPGMGM) has biased composition (gly residues).

It belongs to the chaperonin (HSP60) family. As to quaternary structure, forms a cylinder of 14 subunits composed of two heptameric rings stacked back-to-back. Interacts with the co-chaperonin GroES.

The protein localises to the cytoplasm. It carries out the reaction ATP + H2O + a folded polypeptide = ADP + phosphate + an unfolded polypeptide.. In terms of biological role, together with its co-chaperonin GroES, plays an essential role in assisting protein folding. The GroEL-GroES system forms a nano-cage that allows encapsulation of the non-native substrate proteins and provides a physical environment optimized to promote and accelerate protein folding. The sequence is that of Chaperonin GroEL 2 from Syntrophus aciditrophicus (strain SB).